The sequence spans 372 residues: 4-hydroxy-3-methylbut-2-en-1-yl diphosphate synthase (flavodoxin) (372 aa).

4 residues coordinate [4Fe-4S] cluster: C270, C273, C305, and E312.

This sequence belongs to the IspG family. [4Fe-4S] cluster is required as a cofactor.

It carries out the reaction (2E)-4-hydroxy-3-methylbut-2-enyl diphosphate + oxidized [flavodoxin] + H2O + 2 H(+) = 2-C-methyl-D-erythritol 2,4-cyclic diphosphate + reduced [flavodoxin]. It functions in the pathway isoprenoid biosynthesis; isopentenyl diphosphate biosynthesis via DXP pathway; isopentenyl diphosphate from 1-deoxy-D-xylulose 5-phosphate: step 5/6. Converts 2C-methyl-D-erythritol 2,4-cyclodiphosphate (ME-2,4cPP) into 1-hydroxy-2-methyl-2-(E)-butenyl 4-diphosphate. This Shigella boydii serotype 18 (strain CDC 3083-94 / BS512) protein is 4-hydroxy-3-methylbut-2-en-1-yl diphosphate synthase (flavodoxin).